The following is a 268-amino-acid chain: L-proline trans-4-hydroxylase (268 aa).

The Fe cation site is built by His113, Asp115, and His218.

This sequence belongs to the PhyH family. In terms of assembly, monomer. Fe(2+) serves as cofactor.

The catalysed reaction is L-proline + 2-oxoglutarate + O2 = trans-4-hydroxy-L-proline + succinate + CO2. The protein operates within antibiotic biosynthesis. Its activity is regulated as follows. Competitively inhibited by pyridine-2,4-dicarboxylate. Inhibited by diethyl pyrocarbonate (DEPC), 3,4-dihydroxybenzoate, pyridine-2,5-dicarboxylate, alpha,alpha'-dipyridyl, and some metal ions such as Co(2+) and Zn(2+). Functionally, involved in the biosynthesis of the peptidolactone antibiotic etamycin (viridogrisein). Catalyzes the hydroxylation of free L-proline at the C-4 position to yield trans-4-hydroxy-L-proline. This is L-proline trans-4-hydroxylase from Streptomyces griseoviridis.